We begin with the raw amino-acid sequence, 46 residues long: Protein PsbN (46 aa).

The helical transmembrane segment at Val-10–Phe-30 threads the bilayer.

This sequence belongs to the PsbN family.

The protein localises to the cellular thylakoid membrane. Its function is as follows. May play a role in photosystem I and II biogenesis. The polypeptide is Protein PsbN (Synechococcus sp. (strain WH7803)).